The sequence spans 27 residues: Ranatuerin-2Cb (27 aa).

A disulfide bridge links C20 with C25.

As to expression, expressed by the skin glands.

The protein resides in the secreted. Antibacterial activity against Gram-positive bacterium S.aureus (MIC=40 uM) and Gram-negative bacterium E.coli (MIC=2 uM). Has activity against C.albicans (MIC=46 uM). The sequence is that of Ranatuerin-2Cb from Lithobates clamitans (Green frog).